A 351-amino-acid polypeptide reads, in one-letter code: Transmembrane protein DDB_G0272716 (351 aa).

N-linked (GlcNAc...) asparagine glycosylation is found at asparagine 4 and asparagine 59. A run of 2 helical transmembrane segments spans residues 175 to 195 (FSSL…TAIG) and 215 to 235 (VVAP…GAFI). An N-linked (GlcNAc...) asparagine glycan is attached at asparagine 345.

It localises to the membrane. In Dictyostelium discoideum (Social amoeba), this protein is Transmembrane protein DDB_G0272716.